The chain runs to 351 residues: Fructose-1,6-bisphosphatase class 1 1 (351 aa).

4 residues coordinate Mg(2+): E84, D106, L108, and D109. Substrate is bound by residues 109–112 and N205; that span reads DGSS. E277 is a binding site for Mg(2+).

The protein belongs to the FBPase class 1 family. Homotetramer. Mg(2+) serves as cofactor.

It localises to the cytoplasm. The catalysed reaction is beta-D-fructose 1,6-bisphosphate + H2O = beta-D-fructose 6-phosphate + phosphate. It functions in the pathway carbohydrate biosynthesis; Calvin cycle. In Methylibium petroleiphilum (strain ATCC BAA-1232 / LMG 22953 / PM1), this protein is Fructose-1,6-bisphosphatase class 1 1.